Reading from the N-terminus, the 87-residue chain is Kappa-6-bungarotoxin (87 aa).

The first 21 residues, 1-21 (MKTLLLSLVVVTIVCLDLGYT), serve as a signal peptide directing secretion. Disulfide bonds link cysteine 24/cysteine 42, cysteine 35/cysteine 63, cysteine 48/cysteine 52, cysteine 67/cysteine 79, and cysteine 80/cysteine 85.

It belongs to the three-finger toxin family. Long-chain subfamily. Kappa-neurotoxin sub-subfamily. As to quaternary structure, homo- and heterodimer; non-covalently linked. Expressed by the venom gland.

It is found in the secreted. Postsynaptic neurotoxin that binds and inhibits neuronal nicotinic acetylcholine receptors (nAChR) with high affinity (IC(50)&lt;100 nM). Is a selective, and slowly reversible antagonist of alpha-3/CHRNA3-containing and some alpha-4/CHRNA4-containing AChRs. The chain is Kappa-6-bungarotoxin from Bungarus multicinctus (Many-banded krait).